The following is a 116-amino-acid chain: Ribosome-binding factor A (116 aa).

The protein belongs to the RbfA family. Monomer. Binds 30S ribosomal subunits, but not 50S ribosomal subunits or 70S ribosomes.

The protein resides in the cytoplasm. One of several proteins that assist in the late maturation steps of the functional core of the 30S ribosomal subunit. Associates with free 30S ribosomal subunits (but not with 30S subunits that are part of 70S ribosomes or polysomes). Required for efficient processing of 16S rRNA. May interact with the 5'-terminal helix region of 16S rRNA. The protein is Ribosome-binding factor A of Streptococcus pneumoniae (strain ATCC BAA-255 / R6).